The primary structure comprises 1125 residues: Speract receptor (1125 aa).

The signal sequence occupies residues 1 to 21 (MAHARHLFLFMVAFTITMVIA). Over 22–510 (RLDFNPTIIN…GELCTNWALY (489 aa)) the chain is Extracellular. N185 and N409 each carry an N-linked (GlcNAc...) asparagine glycan. The chain crosses the membrane as a helical span at residues 511–531 (LGASIPTFLIIFGGLIGFFIY). The Cytoplasmic segment spans residues 532–1125 (RKRAYEAALD…AANRVIPDDV (594 aa)). The region spanning 571–839 (MSAISVISNA…PNIMAVRTML (269 aa)) is the Protein kinase domain. Residues 914–1044 (SIFFSDIVGF…DTVNTASRME (131 aa)) form the Guanylate cyclase domain.

This sequence belongs to the adenylyl cyclase class-4/guanylyl cyclase family.

It localises to the membrane. The enzyme catalyses GTP = 3',5'-cyclic GMP + diphosphate. Functionally, implicated as a cell-surface receptor on spermatozoa for 'speract' a chemotactic peptide, and on various other cells as a receptor for atrial natriuretic peptide. The protein is Speract receptor of Strongylocentrotus purpuratus (Purple sea urchin).